The primary structure comprises 201 residues: uncharacterized protein (201 aa).

Coiled coils occupy residues 3–43 and 76–120; these read YMDD…EVYK and TGQV…AKTK.

This is an uncharacterized protein from Archaeoglobus fulgidus (strain ATCC 49558 / DSM 4304 / JCM 9628 / NBRC 100126 / VC-16).